Here is a 136-residue protein sequence, read N- to C-terminus: NADPH-dependent 7-cyano-7-deazaguanine reductase (136 aa).

The active-site Thioimide intermediate is C50. Residue D57 is the Proton donor of the active site. Residues 72–74 (YEL) and 91–92 (HE) each bind substrate.

Belongs to the GTP cyclohydrolase I family. QueF type 1 subfamily.

It localises to the cytoplasm. It catalyses the reaction 7-aminomethyl-7-carbaguanine + 2 NADP(+) = 7-cyano-7-deazaguanine + 2 NADPH + 3 H(+). Its pathway is tRNA modification; tRNA-queuosine biosynthesis. In terms of biological role, catalyzes the NADPH-dependent reduction of 7-cyano-7-deazaguanine (preQ0) to 7-aminomethyl-7-deazaguanine (preQ1). The chain is NADPH-dependent 7-cyano-7-deazaguanine reductase from Prochlorococcus marinus (strain MIT 9312).